Consider the following 273-residue polypeptide: 4-hydroxy-tetrahydrodipicolinate reductase (273 aa).

NAD(+) contacts are provided by residues 12–17 and Glu38; that span reads GAGGRM. Arg39 is an NADP(+) binding site. NAD(+) contacts are provided by residues 102 to 104 and 126 to 129; these read GTT and AANF. Catalysis depends on His159, which acts as the Proton donor/acceptor. His160 is a binding site for (S)-2,3,4,5-tetrahydrodipicolinate. Catalysis depends on Lys163, which acts as the Proton donor. 169–170 serves as a coordination point for (S)-2,3,4,5-tetrahydrodipicolinate; sequence GT.

It belongs to the DapB family. In terms of assembly, homotetramer.

The protein resides in the cytoplasm. The catalysed reaction is (S)-2,3,4,5-tetrahydrodipicolinate + NAD(+) + H2O = (2S,4S)-4-hydroxy-2,3,4,5-tetrahydrodipicolinate + NADH + H(+). It catalyses the reaction (S)-2,3,4,5-tetrahydrodipicolinate + NADP(+) + H2O = (2S,4S)-4-hydroxy-2,3,4,5-tetrahydrodipicolinate + NADPH + H(+). It functions in the pathway amino-acid biosynthesis; L-lysine biosynthesis via DAP pathway; (S)-tetrahydrodipicolinate from L-aspartate: step 4/4. Catalyzes the conversion of 4-hydroxy-tetrahydrodipicolinate (HTPA) to tetrahydrodipicolinate. This Salmonella choleraesuis (strain SC-B67) protein is 4-hydroxy-tetrahydrodipicolinate reductase.